Reading from the N-terminus, the 7311-residue chain is MAM and LDL-receptor class A domain-containing protein 2 (7311 aa).

16 consecutive MAM domains span residues 4-171 (AYCD…SCVT), 199-361 (LDCD…FCSP), 363-530 (KQCT…VCPP), 532-695 (GDCN…NCPV), 727-887 (YDCT…QCPV), 889-1050 (MQCS…ACPL), 1052-1220 (GDCT…RCRL), 1228-1392 (FDCN…SCPS), 1394-1557 (GMCS…SCPA), 1559-1722 (GDCS…NCIQ), 1755-1918 (NDCN…KCPS), 1920-2087 (TDCT…PCPL), 2089-2254 (GDCD…RCSV), 2274-2437 (NNCT…PCPP), 2439-2601 (TVCD…PCPP), and 2603-2771 (GSCD…YCVG). Residues 2461-2481 (WKRDSGGTPSAGTGPSRDHTT) are disordered. Residues 2466–2475 (GGTPSAGTGP) show a composition bias toward low complexity. 2 P-type domains span residues 2771–2817 (GLCS…FYHP) and 2818–2862 (SACA…FHGP). 6 cysteine pairs are disulfide-bonded: C2773–C2802, C2784–C2801, C2795–C2813, C2820–C2847, C2831–C2846, and C2841–C2858. 4 MAM domains span residues 2883-3048 (WDCT…TCPP), 3050-3214 (RECD…PCPP), 3216-3384 (GSCD…FCPS), and 3429-3587 (GACT…NCTL). The LDL-receptor class A 1 domain maps to 3593-3628 (SCGQQHRCIRGSCIDRGRVCDYTDDCGDNSDEQNCY). 3 cysteine pairs are disulfide-bonded: C3594–C3605, C3600–C3618, and C3612–C3627. Residues 3632-3794 (YRCSFEKSLC…DLSMTSSCQS (163 aa)) form the MAM 21 domain. 2 LDL-receptor class A domains span residues 3814 to 3850 (PCPR…VNCG) and 4016 to 4054 (SCIS…STCA). Cystine bridges form between C3815–C3827, C3822–C3840, and C3834–C3849. An MAM 22 domain is found at 3850 to 4011 (GSCSFEPGLC…DDVTFQGCAL (162 aa)). Cystine bridges form between C4017–C4029, C4024–C4042, and C4036–C4053. Residues 4058–4221 (ERCNFEQDLC…DVSFTPNCRP (164 aa)) enclose the MAM 23 domain. In terms of domain architecture, LDL-receptor class A 4 spans 4239-4276 (GCQPGKFKCANGGNCISVSKVCNFYSDCSGGSDEMNCP). Disulfide bonds link C4240/C4253, C4247/C4266, and C4260/C4275. The MAM 24 domain maps to 4277–4438 (ATCNFQNSFC…DDVSFEHCAE (162 aa)). The LDL-receptor class A 5 domain occupies 4444–4483 (TCSGLSVFRCQSGHCIAMSGKCDFEPDCCDGSEETNIVCA). Intrachain disulfides connect C4445-C4458, C4453-C4471, and C4465-C4482. The 161-residue stretch at 4486-4646 (NRCNFEAGLC…DISFTPDCVV (161 aa)) folds into the MAM 25 domain. LDL-receptor class A domains follow at residues 4660-4699 (PTQP…DLCG) and 4859-4899 (YCSG…QSCS). 5 disulfide bridges follow: C4668/C4687, C4681/C4698, C4860/C4876, C4871/C4889, and C4883/C4898. An MAM 26 domain is found at 4700–4862 (WPCDFQRGTC…NNYTLTYCSG (163 aa)). An MAM 27 domain is found at 4903–5063 (SRCTFENGLC…SIAMKPSCQQ (161 aa)). The LDL-receptor class A 8 domain occupies 5085-5122 (NCVLPQVPCVSDGKCVSPSQVCDFNLDCADASDERSCP). Cystine bridges form between C5086–C5099, C5093–C5112, and C5106–C5121. The MAM 28 domain occupies 5123–5281 (HMCTFESDQC…DDIKFVDCAL (159 aa)). In terms of domain architecture, LDL-receptor class A 9 spans 5287-5322 (SCPSQFTCARNSCVSNDYVCDFNDDCGDGSDETLCG). Intrachain disulfides connect C5288–C5299, C5294–C5312, and C5306–C5321. The 164-residue stretch at 5326–5489 (TRCDFSRGSC…DVSFTTGCKQ (164 aa)) folds into the MAM 29 domain. Residues 5513–5552 (QCTTAEFNCFNQGSGACIPSTQVCNFQPNCNDGVDEQNCA) form the LDL-receptor class A 10 domain. 3 disulfides stabilise this stretch: C5514–C5529, C5521–C5542, and C5536–C5551. The MAM 30 domain occupies 5554-5719 (TKCSFDGGDF…DDIEFLNCVP (166 aa)). The LDL-receptor class A 11 domain occupies 5725–5763 (KCTADEFQCARGGCIPKTSVCDFKADCMVGDVSDESSCS). 3 disulfide bridges follow: C5726/C5738, C5733/C5751, and C5745/C5762. Positions 5768–5935 (GQCDFEHGLC…LTPGCQICTD (168 aa)) constitute an MAM 31 domain. The region spanning 5957–5993 (PCSLQQYVCKNLRCVDKAQICNFKDDCGDNSDELPCG) is the LDL-receptor class A 12 domain. 3 disulfides stabilise this stretch: C5958/C5970, C5965/C5983, and C5977/C5992. The MAM 32 domain occupies 5994–6156 (SNCTFEGDCY…DISFTDNCFV (163 aa)). The segment at 6014–6034 (NFHWRRRNGKTPSVGTGPTND) is disordered. The segment covering 6023–6034 (KTPSVGTGPTND) has biased composition (polar residues). In terms of domain architecture, LDL-receptor class A 13 spans 6161–6200 (TCTPNEVKCRTSGHCVAEQRVCDHVKDCNDGTDEDALICS). 3 disulfides stabilise this stretch: C6162-C6175, C6169-C6188, and C6182-C6199. Residues 6204–6365 (ASCDFDVNWC…DISFSAGCYK (162 aa)) form the MAM 33 domain. Positions 6377-6414 (RCSKVQFYCKADDLCINIHWKCDGEKDCTDGADEMLCP) constitute an LDL-receptor class A 14 domain. 3 disulfides stabilise this stretch: C6378–C6391, C6385–C6404, and C6398–C6413. MAM domains lie at 6430–6590 (ANCN…NCAK), 6606–6779 (LDED…NCDF), 6808–6965 (GDCT…QCQF), and 7173–7311 (GSCN…YNNL).

As to expression, component of the acid-insoluble and acid-soluble organic matrix of the aragonitic skeleton (at protein level).

The protein resides in the secreted. This is MAM and LDL-receptor class A domain-containing protein 2 from Acropora millepora (Staghorn coral).